A 62-amino-acid polypeptide reads, in one-letter code: U-stichotoxin-Hau1a (62 aa).

The N-terminal stretch at 1 to 21 is a signal peptide; sequence MKPAIFLMLFVAMFLISEGEG. The propeptide occupies 22-31; sequence FKPKDAPQER. At proline 36 the chain carries Hydroxyproline. Cystine bridges form between cysteine 41-cysteine 53 and cysteine 44-cysteine 59.

It belongs to the Hau1a/HC18/HC19 family.

The protein resides in the secreted. It is found in the nematocyst. Functionally, toxin that is lethal to crab. Does not produce the typical symptoms associated with sodium channel toxins in crabs, suggesting that it likely does not act on sodium channels. This is U-stichotoxin-Hau1a from Heteractis aurora (Banded sea anemone).